The chain runs to 713 residues: uncharacterized protein (713 aa).

Residues 686-706 (VWKFNPALYSTITNIFLLIIF) traverse the membrane as a helical segment.

It belongs to the plectrovirus ORF1 family.

The protein localises to the host membrane. This is an uncharacterized protein from Spiroplasma melliferum (SpV1).